Here is a 443-residue protein sequence, read N- to C-terminus: Magnesium transporter MRS2 homolog, mitochondrial (443 aa).

Residues 1 to 49 constitute a mitochondrion transit peptide; it reads MECLRSLPCLLPRAMRLPRRTLCALALDLTSVAPPVAASGRRANLIGRS. Residues 50–339 lie on the Mitochondrial matrix side of the membrane; sequence RAAQLCEPGR…SHRNVMMRLN (290 aa). Mg(2+) contacts are provided by E243, T246, D247, E312, and G329. The chain crosses the membrane as a helical span at residues 340 to 359; that stretch reads LQLTMGTFSLSLFGLMGVAF. 2 residues coordinate Mg(2+): G360 and N362. A GMN motif motif is present at residues 360-362; it reads GMN. The Mitochondrial intermembrane segment spans residues 360 to 370; the sequence is GMNLESSLEED. The helical transmembrane segment at 371 to 401 threads the bilayer; sequence HRIFWLITGIMFMGSGLIWRRLLSFLGRQLE. The Mitochondrial matrix segment spans residues 402 to 443; it reads APLPPMMASLPKKTLLADRSMELKNSLRLDGLGSGRSILTNR.

This sequence belongs to the CorA metal ion transporter (MIT) (TC 1.A.35) family. As to quaternary structure, homopentamer.

Its subcellular location is the mitochondrion inner membrane. Its activity is regulated as follows. May be regulated by calcium ions. Its function is as follows. Magnesium transporter that mediates the influx of magnesium into the mitochondrial matrix and regulates magnesium metabolism. Also permeable to calcium, sodium and potassium ions. Required for normal expression of the mitochondrial respiratory complex I subunits. May play a role in maintaining the inner mitochondrial membrane potential. The sequence is that of Magnesium transporter MRS2 homolog, mitochondrial (MRS2) from Pongo abelii (Sumatran orangutan).